Here is a 294-residue protein sequence, read N- to C-terminus: Lipoprotein NlpI (294 aa).

A signal peptide spans 1–18 (MKPFLRWCFVATALTLAG). Cys19 carries N-palmitoyl cysteine lipidation. Cys19 carries S-diacylglycerol cysteine lipidation. TPR repeat units follow at residues 62-95 (AQLLYERGVLYDSLGLRALARNDFSQALAIRPDM), 96-129 (PEVFNYLGIYLTQAGNFDAAYEAFDSVLELDPTY), and 234-267 (SETNFYLGKYYLSLGDSDSATALFKLAVANNVHN).

Homodimer.

It is found in the cell membrane. Its function is as follows. May be involved in cell division. May play a role in bacterial septation or regulation of cell wall degradation during cell division. This Shigella boydii serotype 4 (strain Sb227) protein is Lipoprotein NlpI (nlpI).